A 595-amino-acid polypeptide reads, in one-letter code: Sorting nexin-9 (595 aa).

The 62-residue stretch at 1–62 folds into the SH3 domain; that stretch reads MATKARVMYD…PTDYVEILPN (62 aa). Positions 89-100 are enriched in low complexity; that stretch reads QTNSSSANSNNQ. The segment at 89–199 is disordered; it reads QTNSSSANSN…QRGNSRAGAS (111 aa). Position 121 is a phosphoserine (Ser121). The segment covering 129 to 144 has biased composition (polar residues); that stretch reads TDGTSAQRNSSANNWD. The span at 159 to 169 shows a compositional bias: acidic residues; that stretch reads GDDDEWDEDWD. Phosphoserine is present on Ser200. Residues 201–213 are critical for tubulation activity; sequence MKLPLNKFPGFAK. Tyr239 is subject to Phosphotyrosine. The PX domain maps to 250–360; sequence FDCVVADPRK…QQFLNFRDEK (111 aa). The a 1,2-diacyl-sn-glycero-3-phospho-(1D-myo-inositol-4,5-bisphosphate) site is built by Arg286, Lys288, and Arg327. At Lys288 the chain carries N6-acetyllysine. A BAR domain is found at 392–595; that stretch reads LIEIEQKCDA…RQALSRFPVM (204 aa).

It belongs to the sorting nexin family. As to quaternary structure, homodimer, and homooligomer. Heterodimer with SNX18. Interacts with ITCH. Interacts (via SH3 domain) with TNK2, WASL and ACTR3. Identified in a complex with TNK2 and clathrin heavy chains. Identified in a complex with the AP-2 complex, clathrin and DNM2. Interacts (via SH3 domain) with DNM1 and DNM2. Identified in an oligomeric complex containing DNM1 and SNX9. Interacts with FCHSD1. Interacts with ADAM9 and ADAM15 cytoplasmic tails. In terms of processing, phosphorylated on tyrosine residues by TNK2. Phosphorylation promotes its activity in the degradation of EGFR. Post-translationally, ubiquitinated by ITCH. Detected in inner ear vestibula and in the cuticular plate of cochlear hair cells (at protein level).

The protein localises to the cytoplasmic vesicle membrane. The protein resides in the cell membrane. It localises to the cytoplasmic vesicle. It is found in the clathrin-coated vesicle. Its subcellular location is the golgi apparatus. The protein localises to the trans-Golgi network. The protein resides in the cell projection. It localises to the ruffle. It is found in the cytoplasm. Involved in endocytosis and intracellular vesicle trafficking, both during interphase and at the end of mitosis. Required for efficient progress through mitosis and cytokinesis. Required for normal formation of the cleavage furrow at the end of mitosis. Plays a role in endocytosis via clathrin-coated pits, but also clathrin-independent, actin-dependent fluid-phase endocytosis. Plays a role in macropinocytosis. Promotes internalization of TNFR. Promotes degradation of EGFR after EGF signaling. Stimulates the GTPase activity of DNM1. Promotes DNM1 oligomerization. Promotes activation of the Arp2/3 complex by WASL, and thereby plays a role in the reorganization of the F-actin cytoskeleton. Binds to membranes enriched in phosphatidylinositol 4,5-bisphosphate and promotes membrane tubulation. Has lower affinity for membranes enriched in phosphatidylinositol 3-phosphate. The chain is Sorting nexin-9 (Snx9) from Mus musculus (Mouse).